The following is a 425-amino-acid chain: MADKEAAFDDAVEERVINEEYKIWKKNTPFLYDLVMTHALEWPSLTAQWLPDVTRPDGKDFSIHRLVLGTHTSDEQNHLVIASVQLPNDDAQFDASHYDSEKGEFGGFGSVSGKIEIEIKINHEGEVNRARYMPQNPCIIATKTPSSDVLVFDYTKHPSKPDPSGECNPDLRLRGHQKEGYGLSWNPNLSGNLLSASDDHTICLWDISAVPKEGKVVDAKTIFTGHTAVVEDVSWHLLHESLFGSVADDQKLMIWDTRSNNTSKPSHSVDAHTAEVNCLSFNPYSEFILATGSADKTVALWDLRNLKLKLHSFESHKDEIFQVQWSPHNETILASSGTDRRLNVWDLSKIGEEQSPEDAEDGPPELLFIHGGHTAKISDFSWNPNEPWVICSVSEDNIMQVWQMAENIYNDEDTEGGVDPEGQSS.

Ala2 is modified (N-acetylalanine). WD repeat units lie at residues 32–125 (YDLV…NHEG), 126–175 (EVNR…RLRG), 176–223 (HQKE…KTIF), 225–270 (GHTA…HSVD), 271–314 (AHTA…HSFE), 315–371 (SHKD…FIHG), and 372–404 (GHTA…VWQM).

It belongs to the WD repeat RBAP46/RBAP48/MSI1 family. Binds directly to histone H4, probably via helix 1 of the histone fold, a region that is not accessible when histone H4 is in chromatin. Forms a large corepressor complex that contains ncor1, sin3a and possibly sin3b, histone deacetylases hdac2, hdac1, rbbp4 and possibly rbbp7.

It localises to the nucleus. The protein resides in the chromosome. The protein localises to the telomere. Its function is as follows. Core histone-binding subunit that may target chromatin assembly factors, chromatin remodeling factors and histone deacetylases to their histone substrates in a manner that is regulated by nucleosomal DNA. Component of several complexes which regulate chromatin metabolism. This Xenopus tropicalis (Western clawed frog) protein is Histone-binding protein RBBP4 (rbbp4).